Here is a 1183-residue protein sequence, read N- to C-terminus: DNA-directed RNA polymerase subunit beta (1183 aa).

The segment covering 1153–1162 has biased composition (acidic residues); that stretch reads DMQDNEEEDV. The disordered stretch occupies residues 1153–1183; sequence DMQDNEEEDVVERKVDLQQKDAPQSQKEVTD. A compositionally biased stretch (polar residues) spans 1173–1183; that stretch reads DAPQSQKEVTD.

The protein belongs to the RNA polymerase beta chain family. As to quaternary structure, the RNAP catalytic core consists of 2 alpha, 1 beta, 1 beta' and 1 omega subunit. When a sigma factor is associated with the core the holoenzyme is formed, which can initiate transcription.

It carries out the reaction RNA(n) + a ribonucleoside 5'-triphosphate = RNA(n+1) + diphosphate. Its function is as follows. DNA-dependent RNA polymerase catalyzes the transcription of DNA into RNA using the four ribonucleoside triphosphates as substrates. The protein is DNA-directed RNA polymerase subunit beta of Staphylococcus saprophyticus subsp. saprophyticus (strain ATCC 15305 / DSM 20229 / NCIMB 8711 / NCTC 7292 / S-41).